A 613-amino-acid chain; its full sequence is UvrABC system protein C (613 aa).

One can recognise a GIY-YIG domain in the interval 29–107 (DVAGVYKMLG…IKTLKPKYNI (79 aa)). The 36-residue stretch at 217 to 252 (KELQRELFDSMRKFSDNLDYESAMVYRDRLQALKSI) folds into the UVR domain.

Belongs to the UvrC family. As to quaternary structure, interacts with UvrB in an incision complex.

The protein localises to the cytoplasm. Functionally, the UvrABC repair system catalyzes the recognition and processing of DNA lesions. UvrC both incises the 5' and 3' sides of the lesion. The N-terminal half is responsible for the 3' incision and the C-terminal half is responsible for the 5' incision. This chain is UvrABC system protein C, found in Anaplasma marginale (strain St. Maries).